The following is a 326-amino-acid chain: Dolichyl-phosphate beta-glucosyltransferase (326 aa).

Residues 1–7 (MWTCLCQ) lie on the Lumenal side of the membrane. Residues 8-28 (LCFYLLSTLAVAALSIAALVL) form a helical membrane-spanning segment. Over 29 to 326 (YKTKPYPNIK…RIASIQKKEK (298 aa)) the chain is Cytoplasmic.

Belongs to the glycosyltransferase 2 family.

The protein resides in the endoplasmic reticulum membrane. The enzyme catalyses a di-trans,poly-cis-dolichyl phosphate + UDP-alpha-D-glucose = a di-trans,poly-cis-dolichyl beta-D-glucosyl phosphate + UDP. Its pathway is protein modification; protein glycosylation. Functionally, required for normal production of N-glycosylated proteins in the endoplasmic reticulum (ER). Required for embryonic segmentation, dorsal-ventral patterning and gastrulation. Required for chitin orientation and shaping of the apical and lateral plasma membranes of epidermal cells during cuticle differentiation. Also required for correctly shaping apical membrane topology of the epithelia of other organs such as the midgut and the hindgut. In Drosophila melanogaster (Fruit fly), this protein is Dolichyl-phosphate beta-glucosyltransferase (wol).